Here is a 187-residue protein sequence, read N- to C-terminus: Ribosome-recycling factor (187 aa).

This sequence belongs to the RRF family.

The protein resides in the cytoplasm. Its function is as follows. Responsible for the release of ribosomes from messenger RNA at the termination of protein biosynthesis. May increase the efficiency of translation by recycling ribosomes from one round of translation to another. This is Ribosome-recycling factor from Mycoplasmopsis pulmonis (strain UAB CTIP) (Mycoplasma pulmonis).